Here is a 550-residue protein sequence, read N- to C-terminus: Chaperonin GroEL 2 (550 aa).

Residues 30–33 (TLGP), lysine 51, 87–91 (DGTTT), glycine 415, 480–482 (NAA), and aspartate 496 contribute to the ATP site.

This sequence belongs to the chaperonin (HSP60) family. Forms a cylinder of 14 subunits composed of two heptameric rings stacked back-to-back. Interacts with the co-chaperonin GroES.

It is found in the cytoplasm. It carries out the reaction ATP + H2O + a folded polypeptide = ADP + phosphate + an unfolded polypeptide.. Its function is as follows. Together with its co-chaperonin GroES, plays an essential role in assisting protein folding. The GroEL-GroES system forms a nano-cage that allows encapsulation of the non-native substrate proteins and provides a physical environment optimized to promote and accelerate protein folding. The polypeptide is Chaperonin GroEL 2 (Erythrobacter litoralis (strain HTCC2594)).